The primary structure comprises 275 residues: Ribosomal RNA small subunit methyltransferase A (275 aa).

6 residues coordinate S-adenosyl-L-methionine: Asn-20, Leu-22, Gly-47, Glu-68, Asp-90, and Asn-110.

Belongs to the class I-like SAM-binding methyltransferase superfamily. rRNA adenine N(6)-methyltransferase family. RsmA subfamily.

The protein localises to the cytoplasm. The enzyme catalyses adenosine(1518)/adenosine(1519) in 16S rRNA + 4 S-adenosyl-L-methionine = N(6)-dimethyladenosine(1518)/N(6)-dimethyladenosine(1519) in 16S rRNA + 4 S-adenosyl-L-homocysteine + 4 H(+). Functionally, specifically dimethylates two adjacent adenosines (A1518 and A1519) in the loop of a conserved hairpin near the 3'-end of 16S rRNA in the 30S particle. May play a critical role in biogenesis of 30S subunits. The sequence is that of Ribosomal RNA small subunit methyltransferase A from Chlorobaculum tepidum (strain ATCC 49652 / DSM 12025 / NBRC 103806 / TLS) (Chlorobium tepidum).